Here is a 76-residue protein sequence, read N- to C-terminus: Translational regulator CsrA (76 aa).

The protein belongs to the CsrA/RsmA family. In terms of assembly, homodimer; the beta-strands of each monomer intercalate to form a hydrophobic core, while the alpha-helices form wings that extend away from the core.

The protein localises to the cytoplasm. Functionally, a translational regulator that binds mRNA to regulate translation initiation and/or mRNA stability. Usually binds in the 5'-UTR at or near the Shine-Dalgarno sequence preventing ribosome-binding, thus repressing translation. Its main target seems to be the major flagellin gene, while its function is anatagonized by FliW. In Pseudothermotoga lettingae (strain ATCC BAA-301 / DSM 14385 / NBRC 107922 / TMO) (Thermotoga lettingae), this protein is Translational regulator CsrA.